The following is a 778-amino-acid chain: Dynein axonemal intermediate chain 4 (778 aa).

6 WD repeats span residues 477 to 517 (HCES…QTPI), 526 to 573 (LHTS…ECVD), 586 to 629 (RHIS…QYLE), 633 to 673 (AHKR…PVMG), 676 to 715 (SGQRVVFDIMWSPHCATVFGAVSEGKVEIWDLRVSSLDPT), and 721 to 760 (SPGVNPTALLFSPETDCVLVGDSEGQVTVYKLKNITAGGG).

Part of the multisubunit axonemal dynein complex formed at least of two heavy chains and a number of intermediate and light chains.

Its subcellular location is the cytoplasm. It localises to the cytoskeleton. It is found in the flagellum axoneme. The protein localises to the cilium axoneme. The protein resides in the dynein axonemal particle. In terms of biological role, plays a critical role in the assembly of axonemal dynein complex. Plays a key role in ciliary motility. In Danio rerio (Zebrafish), this protein is Dynein axonemal intermediate chain 4.